We begin with the raw amino-acid sequence, 225 residues long: Uridylate kinase (225 aa).

9–10 provides a ligand contact to ATP; the sequence is GS. Glycine 44 provides a ligand contact to UMP. Glycine 45 and arginine 49 together coordinate ATP. Residues aspartate 66 and 114-120 each bind UMP; that span reads THPGHTT. Threonine 140, asparagine 141, tyrosine 146, and aspartate 149 together coordinate ATP.

The protein belongs to the UMP kinase family. As to quaternary structure, homohexamer.

The protein localises to the cytoplasm. It carries out the reaction UMP + ATP = UDP + ADP. It participates in pyrimidine metabolism; CTP biosynthesis via de novo pathway; UDP from UMP (UMPK route): step 1/1. Inhibited by UTP. Catalyzes the reversible phosphorylation of UMP to UDP. The chain is Uridylate kinase from Thermococcus kodakarensis (strain ATCC BAA-918 / JCM 12380 / KOD1) (Pyrococcus kodakaraensis (strain KOD1)).